Here is a 255-residue protein sequence, read N- to C-terminus: Uracil-DNA glycosylase (255 aa).

Asp90 functions as the Proton acceptor in the catalytic mechanism.

It belongs to the uracil-DNA glycosylase (UDG) superfamily. UNG family.

It localises to the host nucleus. It carries out the reaction Hydrolyzes single-stranded DNA or mismatched double-stranded DNA and polynucleotides, releasing free uracil.. Excises uracil residues from the DNA which can arise as a result of misincorporation of dUMP residues by DNA polymerase or deamination of cytosines. Therefore may reduce deleterious uracil incorporation into the viral genome, particularly in terminally differentiated cells which lack DNA repair enzymes. The polypeptide is Uracil-DNA glycosylase (Equine herpesvirus 2 (strain 86/87) (EHV-2)).